The sequence spans 153 residues: Glucose-6-phosphate 1-dehydrogenase (153 aa).

Residues arginine 21 and lysine 120 each coordinate NADP(+). Position 120 (lysine 120) interacts with D-glucose 6-phosphate.

The protein belongs to the glucose-6-phosphate dehydrogenase family.

It localises to the cytoplasm. Its subcellular location is the cytosol. It catalyses the reaction D-glucose 6-phosphate + NADP(+) = 6-phospho-D-glucono-1,5-lactone + NADPH + H(+). It functions in the pathway carbohydrate degradation; pentose phosphate pathway; D-ribulose 5-phosphate from D-glucose 6-phosphate (oxidative stage): step 1/3. Its function is as follows. Cytosolic glucose-6-phosphate dehydrogenase that catalyzes the first and rate-limiting step of the oxidative branch within the pentose phosphate pathway/shunt, an alternative route to glycolysis for the dissimilation of carbohydrates and a major source of reducing power and metabolic intermediates for fatty acid and nucleic acid biosynthetic processes. This chain is Glucose-6-phosphate 1-dehydrogenase (ZW), found in Hyalophora cecropia (Cecropia moth).